The sequence spans 302 residues: Transmembrane protein 191C (302 aa).

Disordered stretches follow at residues 1-21 (MAAT…GRQR) and 54-73 (LRRR…EAAR). A coiled-coil region spans residues 5–160 (QELLLQLQKD…EKLQQDALQT (156 aa)). The helical transmembrane segment at 238–258 (VLGALQVLLTLPLLFLGLSLL) threads the bilayer.

It belongs to the TMEM191 family.

It is found in the membrane. The polypeptide is Transmembrane protein 191C (Homo sapiens (Human)).